The chain runs to 194 residues: Mitochondrial inner membrane protease ATP23 (194 aa).

Residues 1 to 20 form a disordered region; the sequence is MEDAAAPNSGSEFNPGARRG. Position 96 (His-96) interacts with Zn(2+). The active site involves Glu-97. His-100 is a Zn(2+) binding site.

This sequence belongs to the peptidase M76 family.

The protein resides in the mitochondrion inner membrane. Its function is as follows. Has a dual role in the assembly of mitochondrial ATPase. Acts as a protease that removes the N-terminal 10 residues of mitochondrial ATPase CF(0) subunit 6 (ATP6) at the intermembrane space side. Also involved in the correct assembly of the membrane-embedded ATPase CF(0) particle, probably mediating association of ATP6 with the subunit 9 ring. The chain is Mitochondrial inner membrane protease ATP23 from Arabidopsis thaliana (Mouse-ear cress).